The primary structure comprises 258 residues: Pimeloyl-[acyl-carrier protein] methyl ester esterase (258 aa).

Positions 16 to 242 (LVLLHGWGLN…AAHAPFISHP (227 aa)) constitute an AB hydrolase-1 domain. Residues Trp-22, 82–83 (SM), and 143–147 (FLALQ) each bind substrate. Ser-82 functions as the Nucleophile in the catalytic mechanism. Catalysis depends on residues Asp-207 and His-235. Position 235 (His-235) interacts with substrate.

It belongs to the AB hydrolase superfamily. Carboxylesterase BioH family. Monomer.

It localises to the cytoplasm. The catalysed reaction is 6-carboxyhexanoyl-[ACP] methyl ester + H2O = 6-carboxyhexanoyl-[ACP] + methanol + H(+). The protein operates within cofactor biosynthesis; biotin biosynthesis. In terms of biological role, the physiological role of BioH is to remove the methyl group introduced by BioC when the pimeloyl moiety is complete. It allows to synthesize pimeloyl-ACP via the fatty acid synthetic pathway through the hydrolysis of the ester bonds of pimeloyl-ACP esters. The polypeptide is Pimeloyl-[acyl-carrier protein] methyl ester esterase (Yersinia pseudotuberculosis serotype O:1b (strain IP 31758)).